Here is a 395-residue protein sequence, read N- to C-terminus: 1-deoxy-D-xylulose 5-phosphate reductoisomerase (395 aa).

7 residues coordinate NADPH: T15, G16, S17, I18, G41, N43, and N126. Residue K127 participates in 1-deoxy-D-xylulose 5-phosphate binding. Residue E128 participates in NADPH binding. D152 lines the Mn(2+) pocket. Residues S153, E154, S178, and H201 each contribute to the 1-deoxy-D-xylulose 5-phosphate site. Residue E154 participates in Mn(2+) binding. Residue G207 participates in NADPH binding. Residues S214, N219, K220, and E223 each contribute to the 1-deoxy-D-xylulose 5-phosphate site. E223 provides a ligand contact to Mn(2+).

The protein belongs to the DXR family. Mg(2+) is required as a cofactor. It depends on Mn(2+) as a cofactor.

It catalyses the reaction 2-C-methyl-D-erythritol 4-phosphate + NADP(+) = 1-deoxy-D-xylulose 5-phosphate + NADPH + H(+). Its pathway is isoprenoid biosynthesis; isopentenyl diphosphate biosynthesis via DXP pathway; isopentenyl diphosphate from 1-deoxy-D-xylulose 5-phosphate: step 1/6. Functionally, catalyzes the NADPH-dependent rearrangement and reduction of 1-deoxy-D-xylulose-5-phosphate (DXP) to 2-C-methyl-D-erythritol 4-phosphate (MEP). The chain is 1-deoxy-D-xylulose 5-phosphate reductoisomerase from Ruegeria sp. (strain TM1040) (Silicibacter sp.).